A 591-amino-acid chain; its full sequence is Proteasome-associated ATPase (591 aa).

A coiled-coil region spans residues 8–77 (DSVAAARELE…LREEVDRLGQ (70 aa)). Residue 278 to 283 (GCGKTL) participates in ATP binding. Residues 590–591 (YL) are docks into pockets in the proteasome alpha-ring.

The protein belongs to the AAA ATPase family. Homohexamer. Assembles into a hexameric ring structure that caps the 20S proteasome core. Strongly interacts with the prokaryotic ubiquitin-like protein Pup through a hydrophobic interface; the interacting region of ARC lies in its N-terminal coiled-coil domain. There is one Pup binding site per ARC hexamer ring. Upon ATP-binding, the C-terminus of ARC interacts with the alpha-rings of the proteasome core, possibly by binding to the intersubunit pockets.

It participates in protein degradation; proteasomal Pup-dependent pathway. ATPase which is responsible for recognizing, binding, unfolding and translocation of pupylated proteins into the bacterial 20S proteasome core particle. May be essential for opening the gate of the 20S proteasome via an interaction with its C-terminus, thereby allowing substrate entry and access to the site of proteolysis. Thus, the C-termini of the proteasomal ATPase may function like a 'key in a lock' to induce gate opening and therefore regulate proteolysis. The polypeptide is Proteasome-associated ATPase (Rhodococcus jostii (strain RHA1)).